The sequence spans 226 residues: Regulator of microtubule dynamics protein 1 (226 aa).

The protein belongs to the FAM82/RMD family. In terms of assembly, interacts with air-2.

It is found in the cytoplasm. It localises to the cytoskeleton. The protein localises to the spindle pole. Its function is as follows. Acts in chromosome segregation and organization during mitosis. This Caenorhabditis elegans protein is Regulator of microtubule dynamics protein 1 (rmd-1).